Consider the following 76-residue polypeptide: Bacteriocin uberolysin (76 aa).

Residues 1-6 (MDILLE) constitute a propeptide that is removed on maturation. A cross-link (cyclopeptide (Leu-Trp)) is located at residues 7–76 (LAGYTGIASG…RNLKAQAVIW (70 aa)).

It belongs to the bacteriocin class V family.

The protein resides in the secreted. Cyclopeptide antibiotic with bacteriolytic activity against most streptococci (except S.rattus and S.mutans), Listeria spp., enterococci and staphylococci. The protein is Bacteriocin uberolysin (ublA) of Streptococcus uberis.